A 200-amino-acid chain; its full sequence is Dipicolinate synthase subunit B (200 aa).

As to quaternary structure, dipicolinate synthase likely consists of DpaA and DpaB, since both proteins are required for DPA synthesis.

The catalysed reaction is (S)-2,3-dihydrodipicolinate + NADP(+) = dipicolinate + NADPH + H(+). In terms of biological role, together with DpaA, catalyzes the conversion of dihydrodipicolinate to dipicolinate (DPA), which constitutes up to 10% of the dry weight of the spore. The polypeptide is Dipicolinate synthase subunit B (dpaB) (Bacillus subtilis (strain 168)).